Reading from the N-terminus, the 422-residue chain is Metallocarboxypeptidase A (422 aa).

The signal sequence occupies residues 1–17 (MRSVLSLALLAANVVTA). A propeptide spans 18–112 (AVVSPFDYSG…FEAYSAGYAP (95 aa)) (activation peptide). Residues 119–419 (SYHSYQDHIS…AGTVAMLKAV (301 aa)) form the Peptidase M14 domain. Residues H179 and E182 each coordinate Zn(2+). Residues 179–182 (HARE), R237, and 254–255 (NR) each bind substrate. Residues C248 and C271 are joined by a disulfide bond. Residue H309 coordinates Zn(2+). 310–311 (SY) provides a ligand contact to substrate. E385 serves as the catalytic Proton donor/acceptor.

This sequence belongs to the peptidase M14 family. Zn(2+) serves as cofactor.

The protein resides in the secreted. Extracellular metalloprotease that contributes to pathogenicity. In Trichophyton tonsurans (Scalp ringworm fungus), this protein is Metallocarboxypeptidase A (MCPA).